Consider the following 129-residue polypeptide: Glycine cleavage system H protein (129 aa).

Residues 24-106 (TYTVGITEHA…YAGGWIFKIK (83 aa)) enclose the Lipoyl-binding domain. N6-lipoyllysine is present on Lys65.

This sequence belongs to the GcvH family. As to quaternary structure, the glycine cleavage system is composed of four proteins: P, T, L and H. The cofactor is (R)-lipoate.

In terms of biological role, the glycine cleavage system catalyzes the degradation of glycine. The H protein shuttles the methylamine group of glycine from the P protein to the T protein. This is Glycine cleavage system H protein from Citrobacter koseri (strain ATCC BAA-895 / CDC 4225-83 / SGSC4696).